Here is a 25-residue protein sequence, read N- to C-terminus: Antimicrobial peptide THP3 (25 aa).

It is found in the secreted. Bactericidal activity; inhibits Staphylococcus aureus. This chain is Antimicrobial peptide THP3, found in Meleagris gallopavo (Wild turkey).